The primary structure comprises 410 residues: Lissencephaly-1 homolog (410 aa).

The LisH domain occupies 7 to 39; that stretch reads QRDELNRAIADYLRSNGYEEAYSVFKKEAELDM. Residues 56 to 82 are a coiled coil; that stretch reads TSVIRLQKKVMELESKLNEAKEEFTSG. WD repeat units follow at residues 106 to 147, 148 to 187, 190 to 229, 232 to 271, 274 to 333, 336 to 377, and 379 to 410; these read GHRS…RTLK, GHTD…CIRT, GHDH…CVKT, GHRE…CKAE, EHEH…CLMT, GHDN…KTLN, and HEHF…WECR.

Belongs to the WD repeat LIS1/nudF family. As to quaternary structure, can self-associate. Component of the cytosolic PAF-AH (I) heterotetrameric enzyme, which is composed of PAFAH1B1 (beta), PAFAH1B2 (alpha2) and PAFAH1B3 (alpha1) subunits. The catalytic activity of the enzyme resides in the alpha1 (PAFAH1B3) and alpha2 (PAFAH1B2) subunits, whereas the beta subunit (PAFAH1B1) has regulatory activity. Trimer formation is not essential for the catalytic activity. Interacts with dynein, dynactin, nde1 and ndel1.

The protein localises to the cytoplasm. It localises to the cytoskeleton. It is found in the microtubule organizing center. The protein resides in the centrosome. Regulatory subunit (beta subunit) of the cytosolic type I platelet-activating factor (PAF) acetylhydrolase (PAF-AH (I)), an enzyme that catalyzes the hydrolyze of the acetyl group at the sn-2 position of PAF and its analogs and participates in the PAF inactivation. Positively regulates the activity of the minus-end directed microtubule motor protein dynein. May enhance dynein-mediated microtubule sliding by targeting dynein to the microtubule plus end. Required for several dynein- and microtubule-dependent processes such as the maintenance of Golgi integrity, the peripheral transport of microtubule fragments and the coupling of the nucleus and centrosome. May be required for proliferation of neuronal precursors and neuronal migration. The chain is Lissencephaly-1 homolog (pafah1b1) from Xenopus tropicalis (Western clawed frog).